A 662-amino-acid polypeptide reads, in one-letter code: Probable quinol oxidase subunit 1 (662 aa).

2 helical membrane passes run 14–34 (WMITMAQIGAPFLVIGLIAVI) and 58–78 (IMYLICAVLMFVRGGIDALLI). His102 lines the Fe(II)-heme a pocket. 8 consecutive transmembrane segments (helical) span residues 103-123 (GVIMIIFMAMPFIFGLWNIVV), 140-160 (VSFWLFFAGMILFNLSFIIGG), 187-207 (IAIQISGLGTLATGINFFVTI), 228-248 (FITTLIVILAFPPLTVALALM), 273-293 (FFWVWGHPEVYIVILPAFGIY), 311-331 (MVWATAGIAFLSFLVWVHHFF), 336-356 (GALINSFFSISTMLIGIPTGV), and 376-396 (MLFSLAFIPNFLLGGVTGVML). The Cu cation site is built by His279, Tyr283, His328, and His329. The segment at residues 279 to 283 (HPEVY) is a cross-link (1'-histidyl-3'-tyrosine (His-Tyr)). A heme a3-binding site is contributed by His414. The next 5 membrane-spanning stretches (helical) occupy residues 415-435 (FHYTLVTGVVFACLAGLIFWY), 451-471 (CFWFFMIGFNVCFLPQFILGL), 493-513 (ISTIGALLMAIGFLFLVVSIV), 587-604 (PVGFWIGIFMTIGGFFLI), and 608-627 (VIPALICLFGIFGTMIYRSF). Residue His416 participates in Fe(II)-heme a binding.

This sequence belongs to the heme-copper respiratory oxidase family. Cu cation is required as a cofactor. Ferriheme a serves as cofactor. It depends on Heme A3. as a cofactor.

Its subcellular location is the cell membrane. The enzyme catalyses 2 a quinol + O2 = 2 a quinone + 2 H2O. It participates in energy metabolism; oxidative phosphorylation. Functionally, catalyzes quinol oxidation with the concomitant reduction of oxygen to water. This Staphylococcus aureus (strain MRSA252) protein is Probable quinol oxidase subunit 1 (qoxB).